Consider the following 155-residue polypeptide: MIYVDADACPVKPEVLKVAERHGLEVTFVANSGLRPSRDPMVRNVIVSNAFDAADNWIAERAGAGDVVVTADVPLAVRCVATGAFVSGPTGRVFDETNIGMASAMRDLGAHLRETGESKGYNASFSPKDRSRFLETFDRLCRRAKSLAGETGGRP.

Belongs to the UPF0178 family.

The chain is UPF0178 protein RHE_CH02229 from Rhizobium etli (strain ATCC 51251 / DSM 11541 / JCM 21823 / NBRC 15573 / CFN 42).